The sequence spans 82 residues: Small ribosomal subunit protein bS16 (82 aa).

Belongs to the bacterial ribosomal protein bS16 family.

The chain is Small ribosomal subunit protein bS16 from Crocosphaera subtropica (strain ATCC 51142 / BH68) (Cyanothece sp. (strain ATCC 51142)).